The sequence spans 95 residues: Putative ESAT-6-like protein X (95 aa).

Residues 72-95 are disordered; that stretch reads HGQKVQRASSSMADTDRSVSSAWS.

It belongs to the WXG100 family.

This is Putative ESAT-6-like protein X from Mycobacterium leprae (strain TN).